Here is a 363-residue protein sequence, read N- to C-terminus: Histidinol-phosphate aminotransferase (363 aa).

The residue at position 227 (Lys-227) is an N6-(pyridoxal phosphate)lysine.

It belongs to the class-II pyridoxal-phosphate-dependent aminotransferase family. Histidinol-phosphate aminotransferase subfamily. Homodimer. Pyridoxal 5'-phosphate serves as cofactor.

The enzyme catalyses L-histidinol phosphate + 2-oxoglutarate = 3-(imidazol-4-yl)-2-oxopropyl phosphate + L-glutamate. It functions in the pathway amino-acid biosynthesis; L-histidine biosynthesis; L-histidine from 5-phospho-alpha-D-ribose 1-diphosphate: step 7/9. The protein is Histidinol-phosphate aminotransferase of Akkermansia muciniphila (strain ATCC BAA-835 / DSM 22959 / JCM 33894 / BCRC 81048 / CCUG 64013 / CIP 107961 / Muc).